Consider the following 247-residue polypeptide: 3,4-dihydroxy-2-butanone 4-phosphate synthase (247 aa).

Residues 38-39 (RE), Asp-43, 179-183 (RMGQT), and Glu-203 each bind D-ribulose 5-phosphate. Glu-39 is a Mg(2+) binding site.

The protein belongs to the DHBP synthase family. As to quaternary structure, homodimer. It depends on Mg(2+) as a cofactor. Mn(2+) is required as a cofactor.

It catalyses the reaction D-ribulose 5-phosphate = (2S)-2-hydroxy-3-oxobutyl phosphate + formate + H(+). Its pathway is cofactor biosynthesis; riboflavin biosynthesis; 2-hydroxy-3-oxobutyl phosphate from D-ribulose 5-phosphate: step 1/1. Its function is as follows. Catalyzes the conversion of D-ribulose 5-phosphate to formate and 3,4-dihydroxy-2-butanone 4-phosphate. This Methanosarcina acetivorans (strain ATCC 35395 / DSM 2834 / JCM 12185 / C2A) protein is 3,4-dihydroxy-2-butanone 4-phosphate synthase.